The following is a 697-amino-acid chain: Phenylalanine--tRNA ligase beta subunit, chloroplastic (697 aa).

A B5 domain is found at 283 to 368; that stretch reads NISRILFIDK…RIYGFDNFIS (86 aa). Mg(2+) is bound by residues aspartate 346, aspartate 352, glutamate 355, and glutamate 356. Positions 609 to 697 constitute an FDX-ACB domain; the sequence is SSYPSLTRDI…IDDLLNEYKL (89 aa).

This sequence belongs to the phenylalanyl-tRNA synthetase beta subunit family. Type 1 subfamily. In terms of assembly, tetramer of two alpha and two beta subunits. Requires Mg(2+) as cofactor.

The protein localises to the plastid. Its subcellular location is the chloroplast. It catalyses the reaction tRNA(Phe) + L-phenylalanine + ATP = L-phenylalanyl-tRNA(Phe) + AMP + diphosphate + H(+). The polypeptide is Phenylalanine--tRNA ligase beta subunit, chloroplastic (Gracilaria tenuistipitata var. liui (Red alga)).